The sequence spans 547 residues: Ribosomal lysine N-methyltransferase set10 (547 aa).

Residues 17-235 enclose the SET domain; it reads KSVEFIQSRD…KGNQLFNNYG (219 aa). Residue Y234 participates in S-adenosyl-L-methionine binding.

Belongs to the class V-like SAM-binding methyltransferase superfamily. RKM1 family.

Its subcellular location is the cytoplasm. The protein resides in the nucleus. In terms of biological role, S-adenosyl-L-methionine-dependent protein-lysine N-methyltransferase that methylates ribosomal protein L23 (rpl23a and rpl23b). The chain is Ribosomal lysine N-methyltransferase set10 (set10) from Schizosaccharomyces pombe (strain 972 / ATCC 24843) (Fission yeast).